The following is a 456-amino-acid chain: MAAFARMVKGQVRNYSAPLDMAIPASKQKYIPSSGSYPKGFLVSGTHVGVKASNTKFPDLALISSETPCSAAAVFTTNKFQAAPVQVSKKTLESRQGQGIRSVVINSGCANAVTGKGGLEDAVSMGKKVDECNGLSEPSTIVMSTGVIGQRLPISKILNKIPTAHENLASTHDAWLTTARAICTTDTFPKLLSRTFVLPSSPGRTYSLAGMTKGAGMIHPNMATLLGVLCTDAPIDPSALQSLLTHAVSRSFNSISVDGDTSTNDTVAILANGAAGGAPISSPASDDYTAMQDILTSFAQSLSQLVVRDGEGATKFVTVRVQNSPDYESARLIASTIARSPLVKTALYGRDANWGRILCAIGYTQGVAPGTVVPERTSVSFKPVDGSPVLKLLVNGEPEQVDEERASVILQEEDLEIVVDLGGGEKGEQGLGGEEAVYWFCDFSHEYVTINGDYRT.

The substrate site is built by Thr184, Lys213, Thr224, Glu311, Asn451, and Thr456. Thr224 (nucleophile) is an active-site residue.

The protein belongs to the ArgJ family. As to quaternary structure, heterodimer of an alpha and a beta chain. In terms of processing, the alpha and beta chains are autoproteolytically processed from a single precursor protein within the mitochondrion.

It localises to the mitochondrion matrix. The catalysed reaction is N(2)-acetyl-L-ornithine + L-glutamate = N-acetyl-L-glutamate + L-ornithine. The enzyme catalyses L-glutamate + acetyl-CoA = N-acetyl-L-glutamate + CoA + H(+). Its pathway is amino-acid biosynthesis; L-arginine biosynthesis; L-ornithine and N-acetyl-L-glutamate from L-glutamate and N(2)-acetyl-L-ornithine (cyclic): step 1/1. It participates in amino-acid biosynthesis; L-arginine biosynthesis; N(2)-acetyl-L-ornithine from L-glutamate: step 1/4. Functionally, catalyzes two activities which are involved in the cyclic version of arginine biosynthesis: the synthesis of acetylglutamate from glutamate and acetyl-CoA, and of ornithine by transacetylation between acetylornithine and glutamate. This Neosartorya fischeri (strain ATCC 1020 / DSM 3700 / CBS 544.65 / FGSC A1164 / JCM 1740 / NRRL 181 / WB 181) (Aspergillus fischerianus) protein is Arginine biosynthesis bifunctional protein ArgJ, mitochondrial.